Here is a 472-residue protein sequence, read N- to C-terminus: 2-methylcitrate synthase, mitochondrial (472 aa).

Residues 1–29 (MALNLTSSRRALGSLKPLTRAAFSGVRGY) constitute a mitochondrion transit peptide. R75 and K193 together coordinate CoA. H271 serves as a coordination point for oxaloacetate. L306 is a binding site for CoA. Residue H307 is part of the active site. CoA-binding residues include V348, G350, and Y351. Oxaloacetate contacts are provided by H353 and R362. Residue H353 is part of the active site. Residues T402, K403, and N408 each coordinate CoA. D410 is an active-site residue. Positions 436 and 456 each coordinate oxaloacetate.

This sequence belongs to the citrate synthase family. In terms of assembly, homodimer.

The protein resides in the mitochondrion matrix. It carries out the reaction propanoyl-CoA + oxaloacetate + H2O = (2S,3S)-2-methylcitrate + CoA + H(+). It catalyses the reaction oxaloacetate + acetyl-CoA + H2O = citrate + CoA + H(+). It participates in organic acid metabolism; propanoate degradation. In terms of biological role, component of the methylcitrate cycle that catalyzes the synthesis of (2S,3S)-2-methylcitrate from propionyl-CoA and oxaloacetate. Plays an important role in detoxification of propionyl-CoA, an inhibitor of both primary and secondary metabolism. Also has citrate synthase activity using as substrates acetyl-CoA and oxaloacetate. This Gibberella moniliformis (Maize ear and stalk rot fungus) protein is 2-methylcitrate synthase, mitochondrial.